A 319-amino-acid polypeptide reads, in one-letter code: Aspartate carbamoyltransferase catalytic subunit (319 aa).

Carbamoyl phosphate is bound by residues arginine 65 and threonine 66. Lysine 93 serves as a coordination point for L-aspartate. Residues arginine 115, histidine 149, and glutamine 152 each coordinate carbamoyl phosphate. L-aspartate is bound by residues arginine 182 and arginine 237. Carbamoyl phosphate contacts are provided by glycine 278 and proline 279.

Belongs to the aspartate/ornithine carbamoyltransferase superfamily. ATCase family. Heterododecamer (2C3:3R2) of six catalytic PyrB chains organized as two trimers (C3), and six regulatory PyrI chains organized as three dimers (R2).

The enzyme catalyses carbamoyl phosphate + L-aspartate = N-carbamoyl-L-aspartate + phosphate + H(+). The protein operates within pyrimidine metabolism; UMP biosynthesis via de novo pathway; (S)-dihydroorotate from bicarbonate: step 2/3. Its function is as follows. Catalyzes the condensation of carbamoyl phosphate and aspartate to form carbamoyl aspartate and inorganic phosphate, the committed step in the de novo pyrimidine nucleotide biosynthesis pathway. In Janthinobacterium sp. (strain Marseille) (Minibacterium massiliensis), this protein is Aspartate carbamoyltransferase catalytic subunit.